The following is a 121-amino-acid chain: UPF0102 protein Hhal_2103 (121 aa).

The tract at residues Met-1–Glu-20 is disordered. Over residues Asn-9–Glu-20 the composition is skewed to basic and acidic residues.

It belongs to the UPF0102 family.

The chain is UPF0102 protein Hhal_2103 from Halorhodospira halophila (strain DSM 244 / SL1) (Ectothiorhodospira halophila (strain DSM 244 / SL1)).